A 721-amino-acid chain; its full sequence is bZIP transcription factor 17 (721 aa).

Disordered regions lie at residues 1–51 (MAEP…LMSD) and 87–232 (QEQF…EKKR). The Cytoplasmic portion of the chain corresponds to 1 to 366 (MAEPITKEQP…KSEAKTKKVA (366 aa)). Residues 9 to 25 (QPPPPAPDPNSTYPPPS) show a composition bias toward pro residues. A compositionally biased stretch (basic and acidic residues) spans 125-141 (ESPRDSDDRCSGADHNL). The segment covering 146–170 (PLSSQGSGNCGSDVSEATNESSPKS) has biased composition (polar residues). Positions 204–216 (DESRNSKYRRSGE) are enriched in basic and acidic residues. A bZIP domain is found at 228-288 (DEKKRARLMR…AENATLRQQL (61 aa)). Residues 230–261 (KKRARLMRNRESAQLSRQRKKHYVEELEEKVR) are basic motif. A leucine-zipper region spans residues 267–274 (ITDLNGKI). The segment at 337 to 359 (PRLKPQNTLGTSKAKKSESKKSE) is disordered. A helical membrane pass occupies residues 367–387 (SISFLGLLFCLFLFGALAPIV). The Lumenal portion of the chain corresponds to 388–721 (NVNYGGISGA…RSGAPHLVTT (334 aa)). The segment covering 422–436 (TSRSGAGTGVSNSNG) has biased composition (polar residues). Residues 422 to 462 (TSRSGAGTGVSNSNGMHRGRDSDRGARKNISATESSVTPGN) are disordered. Residues Asn450, Asn462, Asn609, and Asn617 are each glycosylated (N-linked (GlcNAc...) asparagine). Residues 451–462 (ISATESSVTPGN) show a composition bias toward polar residues. The short motif at 627-630 (RRIL) is the RRIL cleavage motif element. N-linked (GlcNAc...) asparagine glycosylation is found at Asn643 and Asn651.

Belongs to the bZIP family. As to quaternary structure, interacts with BZIP28.

The protein localises to the endoplasmic reticulum membrane. The protein resides in the golgi apparatus membrane. Its subcellular location is the nucleus. Transcriptional activator involved in salt and osmotic stress responses. Functions as a stress sensor and transducer in a signaling pathway that resembles an ER stress response. Following salt stress, BZIP17 is cleaved by SBT6.1 (S1P) and S2P at the C-terminus and the N-terminal bZIP component is translocated to the nucleus, where it activates the expression of salt stress response genes. Functions as a stress sensor and transducer in ER stress signaling pathway. ER stress induces proteolysis of BZIP17 by SBT6.1 (S1P) and S2P, and the N-terminal bZIP component is translocated to the nucleus, where it activates the expression and production of ER chaperones, as well as protein involved in brassinosteroid (BR) signaling, which is required for stress acclimation and growth. The protein is bZIP transcription factor 17 of Arabidopsis thaliana (Mouse-ear cress).